Here is a 747-residue protein sequence, read N- to C-terminus: Probable copper-transporting ATPase PacS (747 aa).

Topologically, residues 1–101 (MVNQQTLTLR…RQLAQRVWVS (101 aa)) are cytoplasmic. An HMA domain is found at 3–69 (NQQTLTLRGM…AIEAAGYHAF (67 aa)). 2 residues coordinate a metal cation: cysteine 14 and cysteine 17. The chain crosses the membrane as a helical span at residues 102–122 (GLIASLLVIGSLPMMLGISIP). Over 123-132 (GIPMWLHHPG) the chain is Extracellular. Residues 133-151 (LQLGLTLPVLWAGRSFFIN) form a helical membrane-spanning segment. Residues 152 to 158 (AWKAFRQ) lie on the Cytoplasmic side of the membrane. A helical membrane pass occupies residues 159-179 (NTATMDTLVAVGTGAAFLYSL). Residues 180-199 (AVTLFPQWLTRQGLPPDVYY) are Extracellular-facing. A helical membrane pass occupies residues 200–220 (EAIAVIIALLLLGRSLEERAK). Over 221-348 (GQTSAAIRQL…KAPIQRLADQ (128 aa)) the chain is Cytoplasmic. A helical transmembrane segment spans residues 349-371 (VTGWFVPAVIAIAILTFVLWFNW). The Extracellular segment spans residues 372-378 (IGNVTLA). Residues 379-396 (LITAVGVLIIACPCALGL) form a helical membrane-spanning segment. Residues 397–688 (ATPTSIMVGT…QLSRATMTNI (292 aa)) are Cytoplasmic-facing. Aspartate 434 serves as the catalytic 4-aspartylphosphate intermediate. Residues aspartate 634 and aspartate 638 each contribute to the Mg(2+) site. A helical transmembrane segment spans residues 689-708 (RQNLFFAFIYNVAGIPIAAG). The Extracellular portion of the chain corresponds to 709–720 (ILYPLLGWLLSP). Residues 721–739 (MLAGAAMAFSSVSVVTNAL) traverse the membrane as a helical segment. Residues 740–747 (RLRQFQPR) lie on the Cytoplasmic side of the membrane.

This sequence belongs to the cation transport ATPase (P-type) (TC 3.A.3) family. Type IB subfamily.

It localises to the cell membrane. The enzyme catalyses Cu(+)(in) + ATP + H2O = Cu(+)(out) + ADP + phosphate + H(+). Functionally, may play a role in the osmotic adaptation. This Synechococcus elongatus (strain ATCC 33912 / PCC 7942 / FACHB-805) (Anacystis nidulans R2) protein is Probable copper-transporting ATPase PacS (pacS).